Reading from the N-terminus, the 122-residue chain is Large ribosomal subunit protein bL19 (122 aa).

The protein belongs to the bacterial ribosomal protein bL19 family.

Functionally, this protein is located at the 30S-50S ribosomal subunit interface and may play a role in the structure and function of the aminoacyl-tRNA binding site. This chain is Large ribosomal subunit protein bL19, found in Chlamydia abortus (strain DSM 27085 / S26/3) (Chlamydophila abortus).